We begin with the raw amino-acid sequence, 1756 residues long: Multifunctional conjugation protein TraI (1756 aa).

Positions 1–330 (MMSIAQVRSA…TQAIAGLSER (330 aa)) are DNA relaxase. Residue tyrosine 16 is the O-(5'-phospho-DNA)-tyrosine intermediate; for relaxase activity of the active site. Tyrosine 17 serves as the catalytic Relaxase. 3 residues coordinate Mg(2+): histidine 146, histidine 157, and histidine 159. The tract at residues 950–1500 (GKEAVMPLME…LRDVAAGRAV (551 aa)) is DNA helicase I. 992–999 (GYAGVGKT) contacts ATP. A required for DNA transfer, may interact with TraM region spans residues 1534–1756 (RNGKSAGIWL…LQKEKTLGGD (223 aa)). The stretch at 1717–1753 (QRVREAVREIARENLLQERLQQMERDMVRDLQKEKTL) forms a coiled coil.

The protein to TraI of plasmid IncFII R100. As to quaternary structure, monomer. Part of the relaxosome, a complex composed of plasmid-encodes TraI, TraM, TraY and host-encoded IHF bound to the F plasmid origin of transfer (oriT). Directly contacts coupling protein TraD. Seems to directly contact TraM via its C-terminus. Mg(2+) serves as cofactor.

It localises to the cytoplasm. The enzyme catalyses ATP-independent breakage of single-stranded DNA, followed by passage and rejoining.. It carries out the reaction ATP + H2O = ADP + phosphate + H(+). Nicking activity (relaxase) is inhibited by bisphosphonates such as the non-competitive inhibitor imidobisphosphate (PNP), etidronic acid (ETIDRO) and clodronic acid (CLODRO). The latter 2 are competitive inhibitors, and are already used clinically to treat bone loss (marketed as Didronel and Bonefos). All 3 compounds also inhibit conjugation and kill F plasmid-containing cells. They are specific to dual tyrosine relaxases such as those found in F and related R conjugative plasmids. Functionally, conjugative DNA transfer (CDT) is the unidirectional transfer of ssDNA plasmid from a donor to a recipient cell. It is the central mechanism by which antibiotic resistance and virulence factors are propagated in bacterial populations. Part of the relaxosome, which facilitates a site- and strand-specific cut in the origin of transfer by TraI, at the nic site. Relaxosome formation requires binding of IHF and TraY to the oriT region, which then facilitates binding of TraI relaxase. TraI forms a covalent 5'-phosphotyrosine intermediate linkage to the ssDNA. The transesterified T-strand moves from the donor cell to the recipient cell in a 5'to 3' direction, with the DNA helicase activity of TraI unwinding the DNA. DNA transfer occurs via the conjugative pore (transferosome) an intercellular junction mediated by a type IV secretion system, with TraD providing the means to link the relaxosome to the conjugative pore. The relaxase completes DNA transfer by reversing the covalent phosphotyrosine linkage and releasing the T-strand. Its function is as follows. TraI has also been identified as DNA helicase I. DNA. helicase I is a potent, highly processive DNA-dependent ATPase, able to unwind about 1.1 kb dsDNA per second in a 5' to 3' manner. This chain is Multifunctional conjugation protein TraI (traI), found in Escherichia coli (strain K12).